Consider the following 174-residue polypeptide: Ribosome maturation factor RimM (174 aa).

Positions 96-170 constitute a PRC barrel domain; sequence PDEFYDHELE…YVVIDPPEGL (75 aa).

It belongs to the RimM family. Binds ribosomal protein uS19.

The protein resides in the cytoplasm. In terms of biological role, an accessory protein needed during the final step in the assembly of 30S ribosomal subunit, possibly for assembly of the head region. Essential for efficient processing of 16S rRNA. May be needed both before and after RbfA during the maturation of 16S rRNA. It has affinity for free ribosomal 30S subunits but not for 70S ribosomes. The protein is Ribosome maturation factor RimM of Nocardia farcinica (strain IFM 10152).